The chain runs to 307 residues: Cytochrome c1 1, heme protein, mitochondrial (307 aa).

The N-terminal 64 residues, 1–64 (MVGGGVIQQI…LLSFSTVASA (64 aa)), are a transit peptide targeting the mitochondrion. Topologically, residues 65–270 (DEAEHGLESP…EPEMEERKLM (206 aa)) are mitochondrial intermembrane. Residues 90–246 (ASIRRGHQVY…YEDGVPATEA (157 aa)) enclose the Cytochrome c domain. 4 residues coordinate heme c: C103, C106, H107, and M226. The chain crosses the membrane as a helical span at residues 271-288 (GFKWIFLLSLALLQAAYY). The Mitochondrial matrix segment spans residues 289 to 307 (RRLKWSVLKSRKLVLDVVN).

This sequence belongs to the cytochrome c family. As to quaternary structure, component of the ubiquinol-cytochrome c oxidoreductase (cytochrome b-c1 complex, complex III, CIII), a multisubunit enzyme composed of 10 subunits. The complex is composed of 3 respiratory subunits cytochrome b (MT-CYB), cytochrome c1 (CYC1-1 or CYC1-2) and Rieske protein (UCR1-1 or UCR1-2), 2 core protein subunits MPPalpha1 (or MPPalpha2) and MPPB, and 5 low-molecular weight protein subunits QCR7-1 (or QCR7-2), UCRQ-1 (or UCRQ-2), QCR9, UCRY and probably QCR6-1 (or QCR6-2). The complex exists as an obligatory dimer and forms supercomplexes (SCs) in the inner mitochondrial membrane with NADH-ubiquinone oxidoreductase (complex I, CI), resulting in different assemblies (supercomplexes SCI(1)III(2) and SCI(2)III(4)). In terms of processing, binds 1 heme c group covalently per subunit.

It is found in the mitochondrion inner membrane. Component of the ubiquinol-cytochrome c oxidoreductase, a multisubunit transmembrane complex that is part of the mitochondrial electron transport chain which drives oxidative phosphorylation. The respiratory chain contains 3 multisubunit complexes succinate dehydrogenase (complex II, CII), ubiquinol-cytochrome c oxidoreductase (cytochrome b-c1 complex, complex III, CIII) and cytochrome c oxidase (complex IV, CIV), that cooperate to transfer electrons derived from NADH and succinate to molecular oxygen, creating an electrochemical gradient over the inner membrane that drives transmembrane transport and the ATP synthase. The cytochrome b-c1 complex catalyzes electron transfer from ubiquinol to cytochrome c, linking this redox reaction to translocation of protons across the mitochondrial inner membrane, with protons being carried across the membrane as hydrogens on the quinol. In the process called Q cycle, 2 protons are consumed from the matrix, 4 protons are released into the intermembrane space and 2 electrons are passed to cytochrome c. Cytochrome c1 is a catalytic core subunit containing a c-type heme. It transfers electrons from the [2Fe-2S] iron-sulfur cluster of the Rieske protein to cytochrome c. The chain is Cytochrome c1 1, heme protein, mitochondrial (CYC1-1) from Arabidopsis thaliana (Mouse-ear cress).